Here is a 209-residue protein sequence, read N- to C-terminus: FMN-dependent NADH:quinone oxidoreductase (209 aa).

Residues S10, 16–18, and 98–101 each bind FMN; these read SHS and MWNF.

It belongs to the azoreductase type 1 family. In terms of assembly, homodimer. FMN serves as cofactor.

It catalyses the reaction 2 a quinone + NADH + H(+) = 2 a 1,4-benzosemiquinone + NAD(+). The catalysed reaction is N,N-dimethyl-1,4-phenylenediamine + anthranilate + 2 NAD(+) = 2-(4-dimethylaminophenyl)diazenylbenzoate + 2 NADH + 2 H(+). Quinone reductase that provides resistance to thiol-specific stress caused by electrophilic quinones. Its function is as follows. Also exhibits azoreductase activity. Catalyzes the reductive cleavage of the azo bond in aromatic azo compounds to the corresponding amines. The chain is FMN-dependent NADH:quinone oxidoreductase from Nitratidesulfovibrio vulgaris (strain ATCC 29579 / DSM 644 / CCUG 34227 / NCIMB 8303 / VKM B-1760 / Hildenborough) (Desulfovibrio vulgaris).